We begin with the raw amino-acid sequence, 363 residues long: MKIGVFVPIGNNGWLISTHAPQYMPTFELNKAIVQKAEHYHFDFALSMIKLRGFGGKTEFWDHNLESFTLMAGLAAVTSKIQIYATAATLTLPPAIVARMASTIDSISGGRFGVNLVTGWQKPEYDQMGMWPGDDYFASRYDYLTEYVQVLRDLWGTGRSDFKGDYFTMNDCRVSPRPSQPMKVICAGQSDAGMAFSAQHADYNFCFGKGVNTPTAFAPTAARMMQAAEKTGRDVGSYVLFMVIADETDEAARAKWEHYKAGADEEALAWLTEQSQKDTRSGSDTNVRQMADPTSAVNINMGTLVGSYASVARMLDEVASVPGTDGVLLTFDDFLAGIDAFGERIQPLMRCRNHIASVTREVA.

FMN-binding positions include 49 to 50, Asn115, Glu124, 140 to 141, and Ser190; these read IK and RY.

This sequence belongs to the NtaA/SnaA/DszA monooxygenase family. RutA subfamily.

It carries out the reaction uracil + FMNH2 + NADH + O2 = (Z)-3-ureidoacrylate + FMN + NAD(+) + H2O + H(+). It catalyses the reaction thymine + FMNH2 + NADH + O2 = (Z)-2-methylureidoacrylate + FMN + NAD(+) + H2O + H(+). Its function is as follows. Catalyzes the pyrimidine ring opening between N-3 and C-4 by an unusual flavin hydroperoxide-catalyzed mechanism, adding oxygen atoms in the process to yield ureidoacrylate peracid, that immediately reacts with FMN forming ureidoacrylate and FMN-N(5)-oxide. The FMN-N(5)-oxide reacts spontaneously with NADH to produce FMN. Requires the flavin reductase RutF to regenerate FMN in vivo. In Klebsiella pneumoniae subsp. pneumoniae (strain ATCC 700721 / MGH 78578), this protein is Pyrimidine monooxygenase RutA.